Reading from the N-terminus, the 261-residue chain is tRNA (guanine-N(1)-)-methyltransferase (261 aa).

Residues Gly113 and 133-138 contribute to the S-adenosyl-L-methionine site; that span reads IGDYVL.

Belongs to the RNA methyltransferase TrmD family. As to quaternary structure, homodimer.

It is found in the cytoplasm. The catalysed reaction is guanosine(37) in tRNA + S-adenosyl-L-methionine = N(1)-methylguanosine(37) in tRNA + S-adenosyl-L-homocysteine + H(+). Its function is as follows. Specifically methylates guanosine-37 in various tRNAs. This Xylella fastidiosa (strain M23) protein is tRNA (guanine-N(1)-)-methyltransferase.